The sequence spans 28 residues: trp operon leader peptide (28 aa).

This protein is involved in control of the biosynthesis of tryptophan. This chain is trp operon leader peptide (trpL), found in Serratia marcescens.